Consider the following 1219-residue polypeptide: DNA ligase 4 (1219 aa).

The ATP site is built by Glu-251, Lys-253, Arg-258, Arg-273, Glu-303, Phe-342, Glu-418, Lys-423, Arg-434, Lys-440, and Lys-442. The active-site N6-AMP-lysine intermediate is the Lys-253. Glu-303 provides a ligand contact to Mg(2+). A Mg(2+)-binding site is contributed by Glu-418. The disordered stretch occupies residues 604–632 (NGTTQKQKESESTQDNPKVNKSSKRGEKK). BRCT domains follow at residues 651–739 (GKTS…PKYF) and 807–909 (VYFY…VYTL). 2 disordered regions span residues 914-1126 (MEES…MDMK) and 1146-1197 (IPSQ…SDVV). Polar residues predominate over residues 932–960 (VASQGSAQTKEPASSKIAITSSRGRSNTR). Positions 1042–1051 (QRSRRGKKAA) are enriched in basic residues. Positions 1056–1065 (DESDENDELD) are enriched in acidic residues. Composition is skewed to basic and acidic residues over residues 1084 to 1096 (VENE…DIAK) and 1117 to 1126 (RNAKTEMDMK). Positions 1148–1159 (SQKTTETSNRTT) are enriched in polar residues.

The protein belongs to the ATP-dependent DNA ligase family. As to quaternary structure, interacts with XRCC4 via its tandem BRCT domains. Interacts with POLL. Requires Mg(2+) as cofactor. Widely expressed, with higher levels in young flowers and roots.

It is found in the nucleus. The catalysed reaction is ATP + (deoxyribonucleotide)n-3'-hydroxyl + 5'-phospho-(deoxyribonucleotide)m = (deoxyribonucleotide)n+m + AMP + diphosphate.. DNA ligase involved in DNA non-homologous end joining (NHEJ); required for double-strand break (DSB) repair. May be involved for T-DNA integration even if not absolutely required. Seems to be dispensable under normal growth conditions. The polypeptide is DNA ligase 4 (LIG4) (Arabidopsis thaliana (Mouse-ear cress)).